Here is a 372-residue protein sequence, read N- to C-terminus: Histidinol-phosphate aminotransferase (372 aa).

Lysine 230 carries the N6-(pyridoxal phosphate)lysine modification.

This sequence belongs to the class-II pyridoxal-phosphate-dependent aminotransferase family. Histidinol-phosphate aminotransferase subfamily. As to quaternary structure, homodimer. It depends on pyridoxal 5'-phosphate as a cofactor.

The catalysed reaction is L-histidinol phosphate + 2-oxoglutarate = 3-(imidazol-4-yl)-2-oxopropyl phosphate + L-glutamate. Its pathway is amino-acid biosynthesis; L-histidine biosynthesis; L-histidine from 5-phospho-alpha-D-ribose 1-diphosphate: step 7/9. This is Histidinol-phosphate aminotransferase from Paenarthrobacter aurescens (strain TC1).